We begin with the raw amino-acid sequence, 203 residues long: Somatotropin (203 aa).

The N-terminal stretch at 1 to 17 (MDRVVIVLSVLSVAASS) is a signal peptide. Q18 is subject to Pyrrolidone carboxylic acid. Position 35 (H35) interacts with Zn(2+). A disulfide bridge links C68 with C176. Residue E185 coordinates Zn(2+). The cysteines at positions 193 and 201 are disulfide-linked.

It belongs to the somatotropin/prolactin family.

It localises to the secreted. Its function is as follows. Growth hormone plays an important role in growth control and is involved in the regulation of several anabolic processes. Implicated as an osmoregulatory substance important for seawater adaptation. The chain is Somatotropin (gh) from Solea senegalensis (Senegalese sole).